A 501-amino-acid chain; its full sequence is MGCGLRKLEDPDDSSPGKIFSTLKRPQVETKTEFAYEYVLLDFTLQASSNPEVIKINSILDIVTKVENYYLKGYIVGAIHPVIQPVGQRKHLPASYLYRVVLLRLKLSPKNSAAPSGQRRPRLVIEECPLTSEAQTNDAAKELIEKINVAAKRGMKFVGFISQHYSPSKFCNGTNHDGDIESMLHVRHGSDENCRSWNEGTLSGQSSESGIEEELHHESGQYQMEQNGSPTSSKSRKGEASDNKLYTVFNAFDDDSTSWAYQEGILSMKVTRKGSVISTLDADWLELTTFYYKQGLSLIDSFVFWETSKGEHLPKSLEGFFIYEEEGSGVPGSSRKGNDAIVVEQWTVIEGCEIKTDYGPLLHTLAEFGWLLTSVLPTPVLRHDSEGNLATKQIVFLQRPVMWNSAAQTPDKKASRHIKGEDKNKATSRSIGLDTTSSQPAESRHLPEECRLSPSRECWTKEGRLAQHNSFSGFSSSDNVLRELDDGQFDQEDGVTQVTCM.

2 disordered regions span residues Met1–Phe20 and Ser196–Glu239. Gly2 is lipidated: N-myristoyl glycine. Cys3 is lipidated: S-palmitoyl cysteine. Polar residues predominate over residues Gly220–Ser233. Ser405 carries the post-translational modification Phosphoserine. Positions Ala407–Glu449 are disordered. Residue Thr409 is modified to Phosphothreonine. A compositionally biased stretch (basic and acidic residues) spans Pro410–Lys425. Over residues Thr427–Ala441 the composition is skewed to polar residues. At Ser430 the chain carries Phosphoserine.

Belongs to the raftlin family.

The protein localises to the cell membrane. Functionally, upon bacterial lipopolysaccharide stimulation, mediates clathrin-dependent internalization of TLR4 in dendritic cells, resulting in activation of TICAM1-mediated signaling and subsequent IFNB1 production. May regulate B-cell antigen receptor-mediated signaling. This Homo sapiens (Human) protein is Raftlin-2 (RFTN2).